A 145-amino-acid polypeptide reads, in one-letter code: Ribosome maturation factor RimP (145 aa).

Belongs to the RimP family.

The protein resides in the cytoplasm. Functionally, required for maturation of 30S ribosomal subunits. The polypeptide is Ribosome maturation factor RimP (Borrelia garinii subsp. bavariensis (strain ATCC BAA-2496 / DSM 23469 / PBi) (Borreliella bavariensis)).